The chain runs to 3926 residues: Protein bassoon (3926 aa).

The disordered stretch occupies residues M1–I161. A lipid anchor (N-myristoyl glycine) is attached at G2. Pro residues-rich tracts occupy residues P15–G30 and P58–G72. The segment at P23–G32 is 5 X 2 AA tandem repeats of P-G. The segment at P61 to G74 is 7 X 2 AA tandem repeats of P-G. Composition is skewed to polar residues over residues R90–G105 and Q130–S157. The residue at position 145 (S145) is a Phosphoserine. R148 is subject to Omega-N-methylarginine. 2 consecutive C4-type zinc fingers follow at residues C170–C193 and C198–C220. Disordered regions lie at residues T231–Q343 and S366–P459. Residues A233–H243 show a composition bias toward polar residues. Residues S244 and S248 each carry the phosphoserine modification. Residues S366 to P377 show a composition bias toward polar residues. 2 consecutive C4-type zinc fingers follow at residues C465–C488 and C493–C515. Disordered regions lie at residues S524–G927 and G940–T1248. Positions P552–P569 are enriched in low complexity. 3 repeat units span residues K571–T577, K578–S584, and K585–K591. Residues K571–K591 are 3 X 7 AA tandem repeats of K-A-S-P-[LQ]-[APS]-[KST]. The segment covering M619–A631 has biased composition (pro residues). Positions Q671 to L680 are enriched in polar residues. The span at S681 to T698 shows a compositional bias: low complexity. Residues F771–S787 show a composition bias toward acidic residues. Basic and acidic residues predominate over residues A788 to Q797. Residues S851–T862 show a composition bias toward acidic residues. Position 867 is an omega-N-methylarginine (R867). Residue S970 is modified to Phosphoserine. Over residues P984–S1001 the composition is skewed to low complexity. A coiled-coil region spans residues I1037–T1092. The segment covering D1039 to L1052 has biased composition (acidic residues). Phosphoserine occurs at positions 1040 and 1041. Residues L1053–R1066 are compositionally biased toward basic and acidic residues. Residue S1090 is modified to Phosphoserine. T1092 is modified (phosphothreonine). Phosphoserine is present on residues S1098 and S1104. Positions E1107–S1122 are enriched in basic and acidic residues. Composition is skewed to low complexity over residues C1123–D1133 and S1163–P1180. A coiled-coil region spans residues L1181–A1208. Basic and acidic residues predominate over residues K1182–L1197. Residues Q1199–R1209 show a composition bias toward low complexity. S1226 carries the post-translational modification Phosphoserine. A coiled-coil region spans residues R1276 to E1294. 2 disordered regions span residues M1298–W1547 and R1570–S1620. Residues S1322–S1332 are compositionally biased toward low complexity. T1343 carries O-linked (GlcNAc) threonine glycosylation. Positions F1346–K1355 are enriched in basic and acidic residues. 2 stretches are compositionally biased toward low complexity: residues S1358 to S1367 and G1377 to G1392. T1384 is a glycosylation site (O-linked (GlcNAc) threonine). Polar residues predominate over residues R1408 to D1434. The segment covering P1466–P1493 has biased composition (low complexity). Phosphoserine is present on residues S1477, S1486, and S1488. Residues R1570–T1598 are compositionally biased toward polar residues. The segment covering P1606–P1616 has biased composition (pro residues). 2 positions are modified to omega-N-methylarginine: R1787 and R1791. R1801 carries the post-translational modification Asymmetric dimethylarginine; alternate. R1801 bears the Omega-N-methylarginine; alternate mark. R1813 carries the post-translational modification Omega-N-methylarginine. A disordered region spans residues P1924–G1978. A phosphoserine mark is found at S1985 and S2041. Omega-N-methylarginine occurs at positions 2046 and 2076. R2250, R2260, and R2266 each carry asymmetric dimethylarginine. The tract at residues A2287–E2309 is disordered. O-linked (GlcNAc) threonine glycosylation is present at T2314. The span at G2324–A2341 shows a compositional bias: low complexity. Disordered regions lie at residues G2324–E2370 and P2532–L2568. A coiled-coil region spans residues R2351–P2476. Basic and acidic residues predominate over residues G2353–E2370. Positions S2533 to E2543 are enriched in polar residues. S2570 carries the phosphoserine modification. Phosphothreonine occurs at positions 2587 and 2614. A disordered region spans residues R2601–A2655. Over residues R2635–A2647 the composition is skewed to basic and acidic residues. T2691 is a glycosylation site (O-linked (GlcNAc) threonine). The interval E2721 to E3268 is interaction with DAO. A phosphoserine mark is found at S2802, S2851, and S2857. Residues T2845–K2865 are disordered. T2936 is a glycosylation site (O-linked (GlcNAc) threonine). Residues S2939–L2981 are a coiled coil. Residue S3013 is modified to Phosphoserine. Low complexity predominate over residues A3039–R3055. Disordered regions lie at residues A3039–I3375, G3424–H3551, and E3572–S3897. Positions Y3083 to P3095 are enriched in pro residues. A compositionally biased stretch (low complexity) spans A3165–S3176. The span at S3205 to P3228 shows a compositional bias: polar residues. S3291 is modified (phosphoserine). Basic and acidic residues-rich tracts occupy residues G3321–K3333, Q3363–I3375, and G3465–Q3477. The residue at position 3373 (S3373) is a Phosphoserine. R3492 carries the post-translational modification Omega-N-methylarginine. Composition is skewed to basic and acidic residues over residues V3540 to H3551, W3583 to D3593, L3628 to H3647, and H3657 to P3681. Positions A3703–S3712 are enriched in polar residues. A compositionally biased stretch (low complexity) spans P3741–T3807. Residue R3808 is modified to Omega-N-methylarginine. 2 stretches are compositionally biased toward low complexity: residues A3849–A3860 and G3882–G3892.

In terms of assembly, interacts with PCLO, ERC2/CAST1, RIMS1 and UNC13A. Interacts with TPRG1L. Interacts with DYNLL1 and DYNLL2; these interactions potentially link PTVs to dynein and myosin V motor complexes. Interacts with ATG5; this interaction is important for the regulation of presynaptic autophagy. Interacts (via C-terminus) with TRIO (via N-terminus). Interacts with CTBP1. Interacts with SIAH1; this interaction negatively regulates SIAH1 E3 ligase activity. Interacts (via coiled region) with DAO; the interaction is direct. In terms of processing, myristoylated. The N-terminal myristoylation is not sufficient for presynaptic localization. In terms of tissue distribution, exclusively expressed in brain.

The protein resides in the cytoplasm. The protein localises to the presynaptic active zone. Its subcellular location is the cytoskeleton. It is found in the cytoplasmic vesicle. It localises to the secretory vesicle. The protein resides in the synaptic vesicle membrane. Scaffold protein of the presynaptic cytomatrix at the active zone (CAZ) which is the place in the synapse where neurotransmitter is released. After synthesis, participates in the formation of Golgi-derived membranous organelles termed Piccolo-Bassoon transport vesicles (PTVs) that are transported along axons to sites of nascent synaptic contacts. At the presynaptic active zone, regulates the spatial organization of synaptic vesicle cluster, the protein complexes that execute membrane fusion and compensatory endocytosis. Also functions in processes other than assembly such as the regulation of specific presynaptic protein ubiquitination by interacting with SIAH1 or the regulation of presynaptic autophagy by associating with ATG5. Also mediates synapse to nucleus communication leading to reconfiguration of gene expression by associating with the transcriptional corepressor CTBP1 and by subsequently reducing the size of its pool available for nuclear import. Inhibits the activity of the proportion of DAO enzyme that localizes to the presynaptic active zone, which may modulate synaptic transmission. The sequence is that of Protein bassoon from Homo sapiens (Human).